Reading from the N-terminus, the 607-residue chain is Hemagglutinin glycoprotein (607 aa).

Topologically, residues 1 to 37 (MLSYQDKVGAFYKDNARANSSRLSLVTEDQGGRRPPY) are intravirion. Residues 38–58 (LLFVLLILLVGIMALLAITGV) form a helical membrane-spanning segment. Topologically, residues 59 to 607 (RFHQVSTSNM…IRFSCNRSKP (549 aa)) are virion surface. 7 N-linked (GlcNAc...) asparagine; by host glycosylation sites follow: asparagine 149, asparagine 309, asparagine 391, asparagine 422, asparagine 456, asparagine 587, and asparagine 603.

The protein belongs to the paramyxoviruses hemagglutinin-neuraminidase family. Non-sialidase subfamily. In terms of assembly, binds canine SLAMF1 at the cell surface.

The protein localises to the virion membrane. Its subcellular location is the host cell membrane. In terms of biological role, attaches the virus to cell receptors and thereby initiating infection. Binding of H protein to the receptor induces a conformational change that allows the F protein to trigger virion/cell membranes fusion. The cellular receptor might be SLAM, and may explain the lymphotropism of the virus. The polypeptide is Hemagglutinin glycoprotein (H) (Canine distemper virus (strain A92-27/4) (CDV)).